We begin with the raw amino-acid sequence, 306 residues long: Recombination-associated protein RdgC (306 aa).

It belongs to the RdgC family.

The protein resides in the cytoplasm. It is found in the nucleoid. Its function is as follows. May be involved in recombination. This chain is Recombination-associated protein RdgC, found in Pseudomonas fluorescens (strain Pf0-1).